A 195-amino-acid polypeptide reads, in one-letter code: MSDINQIEFSEISKKDELKSIIESLLFVSGEPLALKDICRIVEEDFKYVEDLMRELMNIYNGDSSRGIKIISLNGTYQLVTKTKNSEYVQKLLKKNVRQSLSQASLESLAIICYKQPITRVEIDEIRGVKSESAIQRLVEKNLVEETGRLEVPGRPILYGTTDEFLRHFALNDLGDLPSIELFEENDEVSDMVEE.

This sequence belongs to the ScpB family. In terms of assembly, homodimer. Homodimerization may be required to stabilize the binding of ScpA to the Smc head domains. Component of a cohesin-like complex composed of ScpA, ScpB and the Smc homodimer, in which ScpA and ScpB bind to the head domain of Smc. The presence of the three proteins is required for the association of the complex with DNA.

It localises to the cytoplasm. Participates in chromosomal partition during cell division. May act via the formation of a condensin-like complex containing Smc and ScpA that pull DNA away from mid-cell into both cell halves. This chain is Segregation and condensation protein B, found in Clostridium perfringens (strain ATCC 13124 / DSM 756 / JCM 1290 / NCIMB 6125 / NCTC 8237 / Type A).